Here is a 345-residue protein sequence, read N- to C-terminus: Leucine zipper protein 2 (345 aa).

The signal sequence occupies residues M1–S19. The stretch at L16–Q211 forms a coiled coil. N-linked (GlcNAc...) asparagine glycosylation is present at N133. The leucine-zipper stretch occupies residues L164–L192. Residues P223–L345 are disordered. Residues G261–R277 are compositionally biased toward basic and acidic residues. Residues P298–L313 are compositionally biased toward polar residues. N301 carries N-linked (GlcNAc...) asparagine glycosylation.

In terms of tissue distribution, expression found only in the brain and spinal cord.

The protein localises to the secreted. This chain is Leucine zipper protein 2 (Luzp2), found in Mus musculus (Mouse).